Reading from the N-terminus, the 249-residue chain is Small ribosomal subunit protein uS3 (249 aa).

The KH type-2 domain maps to 38–106 (IRDFLSKGLE…QVQLNILEVK (69 aa)). A compositionally biased stretch (basic and acidic residues) spans 218-233 (ARDDRGSRRGRNDRPR). Residues 218 to 249 (ARDDRGSRRGRNDRPRRGGGRRRRAAEQKQEG) are disordered.

This sequence belongs to the universal ribosomal protein uS3 family. In terms of assembly, part of the 30S ribosomal subunit. Forms a tight complex with proteins S10 and S14.

Its function is as follows. Binds the lower part of the 30S subunit head. Binds mRNA in the 70S ribosome, positioning it for translation. The chain is Small ribosomal subunit protein uS3 from Corynebacterium kroppenstedtii (strain DSM 44385 / JCM 11950 / CIP 105744 / CCUG 35717).